A 288-amino-acid polypeptide reads, in one-letter code: 4-diphosphocytidyl-2-C-methyl-D-erythritol kinase (288 aa).

Lys-13 is a catalytic residue. An ATP-binding site is contributed by 97-107 (PMGGGIGGGSS). Asp-139 is an active-site residue.

The protein belongs to the GHMP kinase family. IspE subfamily.

It carries out the reaction 4-CDP-2-C-methyl-D-erythritol + ATP = 4-CDP-2-C-methyl-D-erythritol 2-phosphate + ADP + H(+). It functions in the pathway isoprenoid biosynthesis; isopentenyl diphosphate biosynthesis via DXP pathway; isopentenyl diphosphate from 1-deoxy-D-xylulose 5-phosphate: step 3/6. In terms of biological role, catalyzes the phosphorylation of the position 2 hydroxy group of 4-diphosphocytidyl-2C-methyl-D-erythritol. The chain is 4-diphosphocytidyl-2-C-methyl-D-erythritol kinase from Saccharophagus degradans (strain 2-40 / ATCC 43961 / DSM 17024).